Here is a 240-residue protein sequence, read N- to C-terminus: MQPQYQMGYDRAITVFSPDGRLYQVEYAREAVKRGTTAVGIKAHDGVVLIVDKRVSSKLLESSSIEKIFKIDEHIGVASSGLVGDARALVDRARIECQINRVSYDERIEVEALAKKLCDHMQTLTQYGGIRPYGTALLIAGVSDGESRLFETDPSGTLLEYKATGIGIGRPAAMKVFEEEYTADLALKDAILLGLKALHSATEGKFDVDTVEMGIVESSTAQFKKMTKEEVASYVGQFKQ.

This sequence belongs to the peptidase T1A family. As to quaternary structure, the 20S proteasome core is composed of 14 alpha and 14 beta subunits that assemble into four stacked heptameric rings, resulting in a barrel-shaped structure. The two inner rings, each composed of seven catalytic beta subunits, are sandwiched by two outer rings, each composed of seven alpha subunits. The catalytic chamber with the active sites is on the inside of the barrel. Has a gated structure, the ends of the cylinder being occluded by the N-termini of the alpha-subunits. Is capped at one or both ends by the proteasome regulatory ATPase, PAN.

It is found in the cytoplasm. The formation of the proteasomal ATPase PAN-20S proteasome complex, via the docking of the C-termini of PAN into the intersubunit pockets in the alpha-rings, triggers opening of the gate for substrate entry. Interconversion between the open-gate and close-gate conformations leads to a dynamic regulation of the 20S proteasome proteolysis activity. In terms of biological role, component of the proteasome core, a large protease complex with broad specificity involved in protein degradation. This Methanoregula boonei (strain DSM 21154 / JCM 14090 / 6A8) protein is Proteasome subunit alpha.